A 702-amino-acid chain; its full sequence is NAD(P)H-quinone oxidoreductase subunit 5, chloroplastic (702 aa).

The next 15 membrane-spanning stretches (helical) occupy residues 1 to 21, 31 to 51, 81 to 101, 117 to 137, 139 to 159, 177 to 197, 211 to 231, 250 to 270, 272 to 292, 319 to 339, 346 to 366, 388 to 408, 417 to 437, 534 to 554, and 602 to 622; these read WVIP…LFFI, IWAF…VHLS, IDPL…LVLI, FVYI…SNLI, IYFF…FWFT, GDFG…SLEF, NGIN…GAVA, TPIS…FLLA, LFPL…VGTI, LGYM…FHLI, ALLF…VGYS, TTFL…CFWS, WLYS…TAFY, LFPL…GISF, and SLAI…YSFF.

The protein belongs to the complex I subunit 5 family. As to quaternary structure, NDH is composed of at least 16 different subunits, 5 of which are encoded in the nucleus.

The protein resides in the plastid. Its subcellular location is the chloroplast thylakoid membrane. The catalysed reaction is a plastoquinone + NADH + (n+1) H(+)(in) = a plastoquinol + NAD(+) + n H(+)(out). It carries out the reaction a plastoquinone + NADPH + (n+1) H(+)(in) = a plastoquinol + NADP(+) + n H(+)(out). Functionally, NDH shuttles electrons from NAD(P)H:plastoquinone, via FMN and iron-sulfur (Fe-S) centers, to quinones in the photosynthetic chain and possibly in a chloroplast respiratory chain. The immediate electron acceptor for the enzyme in this species is believed to be plastoquinone. Couples the redox reaction to proton translocation, and thus conserves the redox energy in a proton gradient. The protein is NAD(P)H-quinone oxidoreductase subunit 5, chloroplastic (ndhF) of Poa pratensis (Kentucky bluegrass).